The sequence spans 286 residues: Aminoglycoside N(3)-acetyltransferase III (286 aa).

Belongs to the antibiotic N-acetyltransferase family.

It carries out the reaction a 2-deoxystreptamine antibiotic + acetyl-CoA = an N(3)-acetyl-2-deoxystreptamine antibiotic + CoA + H(+). Functionally, resistance to antibiotics containing the 2-deoxy-streptamine ring including gentamicin, kanamycin, tobramycin, neomycin and apramycin. The chain is Aminoglycoside N(3)-acetyltransferase III (aacC3) from Salmonella sp.